A 565-amino-acid polypeptide reads, in one-letter code: Laccase-12 (565 aa).

The N-terminal stretch at 1–24 (MTTVHTFSILLFFCSLFSASLIIA) is a signal peptide. Plastocyanin-like domains lie at 32-148 (VIQE…PTPG) and 158-310 (RQTA…YKKT). An N-linked (GlcNAc...) asparagine glycan is attached at Asn78. Residues His82, His84, His127, and His129 each contribute to the Cu cation site. N-linked (GlcNAc...) asparagine glycosylation is found at Asn187, Asn203, Asn298, Asn325, Asn377, Asn387, Asn395, and Asn428. Positions 413-549 (DFPSKPPVKF…AMAFLVDNGV (137 aa)) constitute a Plastocyanin-like 3 domain. 7 residues coordinate Cu cation: His466, His469, His471, His528, Cys529, His530, and His534.

The protein belongs to the multicopper oxidase family. The cofactor is Cu cation. As to expression, predominantly expressed in the inflorescence stem.

It is found in the secreted. The protein localises to the extracellular space. Its subcellular location is the apoplast. The enzyme catalyses 4 hydroquinone + O2 = 4 benzosemiquinone + 2 H2O. Its function is as follows. Lignin degradation and detoxification of lignin-derived products. The chain is Laccase-12 (LAC12) from Arabidopsis thaliana (Mouse-ear cress).